The primary structure comprises 192 residues: Peptidyl-tRNA hydrolase (192 aa).

Tyrosine 18 contacts tRNA. The Proton acceptor role is filled by histidine 23. Phenylalanine 69, asparagine 71, and asparagine 117 together coordinate tRNA.

The protein belongs to the PTH family. In terms of assembly, monomer.

Its subcellular location is the cytoplasm. The catalysed reaction is an N-acyl-L-alpha-aminoacyl-tRNA + H2O = an N-acyl-L-amino acid + a tRNA + H(+). Functionally, hydrolyzes ribosome-free peptidyl-tRNAs (with 1 or more amino acids incorporated), which drop off the ribosome during protein synthesis, or as a result of ribosome stalling. Its function is as follows. Catalyzes the release of premature peptidyl moieties from peptidyl-tRNA molecules trapped in stalled 50S ribosomal subunits, and thus maintains levels of free tRNAs and 50S ribosomes. This chain is Peptidyl-tRNA hydrolase, found in Neisseria meningitidis serogroup C (strain 053442).